The chain runs to 883 residues: Alanine--tRNA ligase (883 aa).

Positions 560, 564, 665, and 669 each coordinate Zn(2+).

The protein belongs to the class-II aminoacyl-tRNA synthetase family. Zn(2+) is required as a cofactor.

The protein resides in the cytoplasm. The enzyme catalyses tRNA(Ala) + L-alanine + ATP = L-alanyl-tRNA(Ala) + AMP + diphosphate. In terms of biological role, catalyzes the attachment of alanine to tRNA(Ala) in a two-step reaction: alanine is first activated by ATP to form Ala-AMP and then transferred to the acceptor end of tRNA(Ala). Also edits incorrectly charged Ser-tRNA(Ala) and Gly-tRNA(Ala) via its editing domain. The polypeptide is Alanine--tRNA ligase (Mesomycoplasma hyopneumoniae (strain 7448) (Mycoplasma hyopneumoniae)).